A 152-amino-acid polypeptide reads, in one-letter code: UPF0225 protein YchJ (152 aa).

This sequence belongs to the UPF0225 family.

This chain is UPF0225 protein YchJ, found in Escherichia coli O81 (strain ED1a).